Consider the following 269-residue polypeptide: Spermatogenesis-associated serine-rich protein 1 (269 aa).

Basic and acidic residues predominate over residues 1-14; it reads MESSKDTQHGDALE. A disordered region spans residues 1–92; sequence MESSKDTQHG…SKVSLPEIPK (92 aa). Polar residues predominate over residues 18–38; that stretch reads CLANRTSSRQNKRTSLSSSDG. Phosphothreonine is present on Thr54. Residues 67–86 are compositionally biased toward low complexity; sequence SSSSSSSSSSAQSNRSSKVS. Phosphoserine is present on residues Ser72, Ser75, and Ser82.

The chain is Spermatogenesis-associated serine-rich protein 1 (Spats1) from Mus musculus (Mouse).